Consider the following 280-residue polypeptide: Probable cell division protein WhiA (280 aa).

A DNA-binding region (H-T-H motif) is located at residues 247-279; sequence SLEQIANFFFTKYNIKISRSGIQHFSVNLKKLC.

The protein belongs to the WhiA family.

Its function is as follows. Involved in cell division and chromosome segregation. In Mycoplasma genitalium (strain ATCC 33530 / DSM 19775 / NCTC 10195 / G37) (Mycoplasmoides genitalium), this protein is Probable cell division protein WhiA.